We begin with the raw amino-acid sequence, 593 residues long: Vitamin H transporter (593 aa).

Topologically, residues 1 to 121 (MTISNKSWRS…TTQTKAERRL (121 aa)) are extracellular. A phosphoserine mark is found at Ser-32, Ser-33, and Ser-43. A helical transmembrane segment spans residues 122–142 (LYKLDIIIALYFFMLCWSKSV). Topologically, residues 143–166 (DLNNYTNAYVSNMKEDLNMKGNDY) are cytoplasmic. The chain crosses the membrane as a helical span at residues 167-187 (VYTSTIANVGAIVFQLPFMYL). At 188–190 (LPR) the chain is on the extracellular side. The chain crosses the membrane as a helical span at residues 191–211 (FPSHIILPVMDLGWTWFTFAC). Residues 212–224 (YRANSLAELRAYR) lie on the Cytoplasmic side of the membrane. A helical transmembrane segment spans residues 225-245 (FILSAFGAAYYPVSQYILGCW). Residues 246–291 (YAPDEINSRVCLFFCGQQLGSVTSGLLQSRIFKSLNGVHGLAGWRW) are Extracellular-facing. A helical membrane pass occupies residues 292–312 (MFLIDAIAISLPTAIIGFFVI). At 313–361 (PGVPSKCYSLFLTDEEIRIARARNKRNQIKDGVDKSKLAPLWSRKLWKK) the chain is on the cytoplasmic side. Residues 362 to 382 (VFCTPAFWVLVVFDTCSWNNM) form a helical membrane-spanning segment. The Extracellular portion of the chain corresponds to 383-408 (TAYSGSYTLWLKSNTKYSIAQVNNLS). The chain crosses the membrane as a helical span at residues 409–429 (VIPACLGFAYVIFCAFGADLF). Residues 430–432 (RCK) are Cytoplasmic-facing. The helical transmembrane segment at 433 to 453 (WIFMVFAAIMNTVSCALLIKW) threads the bilayer. The Extracellular portion of the chain corresponds to 454 to 460 (DIPSKAK). A helical membrane pass occupies residues 461–481 (WYAFFTTYFSVAASPCLWSFI). The Cytoplasmic portion of the chain corresponds to 482–492 (NDFLRFDPQVK). A helical transmembrane segment spans residues 493 to 513 (AITWIAIYSFSQSTYAWIPTL). Over 514–526 (AWPTVESPRFKTG) the chain is Extracellular. A helical membrane pass occupies residues 527-547 (YTVSLIFGAIYGLWTFVVLFF). Over 548 to 593 (YKRNEKKHALGNGIILYDSNKGEELPEFVKKNMEERDGYYYLKRSS) the chain is Cytoplasmic.

It belongs to the major facilitator superfamily. Allantoate permease family.

It is found in the cell membrane. Its function is as follows. Involved in uptake of biotin with the concomitant entry of protons. The protein is Vitamin H transporter (VHT1) of Saccharomyces cerevisiae (strain ATCC 204508 / S288c) (Baker's yeast).